The chain runs to 492 residues: Glutamyl-tRNA(Gln) amidotransferase subunit A (492 aa).

Residues Lys78 and Ser158 each act as charge relay system in the active site. The active-site Acyl-ester intermediate is the Ser182.

This sequence belongs to the amidase family. GatA subfamily. Heterotrimer of A, B and C subunits.

The enzyme catalyses L-glutamyl-tRNA(Gln) + L-glutamine + ATP + H2O = L-glutaminyl-tRNA(Gln) + L-glutamate + ADP + phosphate + H(+). Functionally, allows the formation of correctly charged Gln-tRNA(Gln) through the transamidation of misacylated Glu-tRNA(Gln) in organisms which lack glutaminyl-tRNA synthetase. The reaction takes place in the presence of glutamine and ATP through an activated gamma-phospho-Glu-tRNA(Gln). This chain is Glutamyl-tRNA(Gln) amidotransferase subunit A, found in Orientia tsutsugamushi (strain Ikeda) (Rickettsia tsutsugamushi).